Here is a 243-residue protein sequence, read N- to C-terminus: Phosphoadenosine 5'-phosphosulfate reductase (243 aa).

Cys239 serves as the catalytic Nucleophile; cysteine thiosulfonate intermediate.

Belongs to the PAPS reductase family. CysH subfamily.

Its subcellular location is the cytoplasm. It carries out the reaction [thioredoxin]-disulfide + sulfite + adenosine 3',5'-bisphosphate + 2 H(+) = [thioredoxin]-dithiol + 3'-phosphoadenylyl sulfate. It participates in sulfur metabolism; hydrogen sulfide biosynthesis; sulfite from sulfate: step 3/3. Catalyzes the formation of sulfite from phosphoadenosine 5'-phosphosulfate (PAPS) using thioredoxin as an electron donor. This chain is Phosphoadenosine 5'-phosphosulfate reductase, found in Proteus mirabilis (strain HI4320).